Here is a 229-residue protein sequence, read N- to C-terminus: Protein FAM3C (229 aa).

A signal peptide spans Met1–Ser24. 2 cysteine pairs are disulfide-bonded: Cys59–Cys87 and Cys65–Cys222. Residues Lys68–Lys226 form the GG-type lectin domain.

The protein belongs to the FAM3 family. As to expression, expressed in the retinal ganglion cell layer.

It is found in the secreted. Its function is as follows. Involved in retinal laminar formation. The sequence is that of Protein FAM3C (fam3c) from Xenopus laevis (African clawed frog).